A 431-amino-acid polypeptide reads, in one-letter code: Mothers against decapentaplegic homolog 6 (431 aa).

Basic residues predominate over residues 1–15; it reads MFRSKRSGLVRRLWR. Residues 1-95 form a disordered region; sequence MFRSKRSGLV…SPPGPGGGEA (95 aa). Polar residues predominate over residues 29–38; it reads GQSSERNATA. Residues 71–90 are compositionally biased toward pro residues; the sequence is PELPPPPPPPPPGGASPPGP. An MH1 domain is found at 85–209; sequence ASPPGPGGGE…FSRLCGPESP (125 aa). Zn(2+) contacts are provided by Cys139, Cys182, Cys194, and His199. Over residues 235–245 the composition is skewed to polar residues; that stretch reads TETEATNSPNV. The tract at residues 235 to 258 is disordered; sequence TETEATNSPNVTPGEFSDASTSPD. The region spanning 265 to 431 is the MH2 domain; the sequence is WCNVAYWEHR…WLEILLSNNR (167 aa).

The protein belongs to the dwarfin/SMAD family. Developing heart, eyes and limbs.

It is found in the nucleus. Its function is as follows. Transforming growth factor-beta superfamily receptors signaling occurs through the Smad family of intracellular mediators. SMAD6 is an inhibitory Smad (i-Smad) that negatively regulates signaling downstream of type I transforming growth factor-beta. Acts as a mediator of TGF-beta and BMP anti-inflammatory activities. Suppresses IL1R-TLR signaling through its direct interaction with PEL1, preventing NF-kappa-B activation, nuclear transport and NF-kappa-B-mediated expression of pro-inflammatory genes. Blocks the BMP-SMAD1 signaling pathway by competing with SMAD4 for receptor-activated SMAD1-binding. Binds to regulatory elements in target promoter regions. The protein is Mothers against decapentaplegic homolog 6 (SMAD6) of Gallus gallus (Chicken).